The chain runs to 400 residues: Glycine betaine/proline betaine transport system ATP-binding protein ProV (400 aa).

The region spanning 29 to 265 (LSKEQILEKT…PANDYVRTFF (237 aa)) is the ABC transporter domain. 61–68 (GLSGSGKS) provides a ligand contact to ATP. CBS domains are found at residues 282–341 (RTPN…GLDA) and 343–400 (LIDA…VNNG).

This sequence belongs to the ABC transporter superfamily. As to quaternary structure, the complex is composed of two ATP-binding proteins (ProV), two transmembrane proteins (ProW) and a solute-binding protein (ProX).

It is found in the cell inner membrane. Functionally, part of the ProU ABC transporter complex involved in glycine betaine and proline betaine uptake. Probably responsible for energy coupling to the transport system. The sequence is that of Glycine betaine/proline betaine transport system ATP-binding protein ProV from Escherichia coli (strain K12).